The sequence spans 240 residues: Small ribosomal subunit protein uS2 (240 aa).

Belongs to the universal ribosomal protein uS2 family.

In Wigglesworthia glossinidia brevipalpis, this protein is Small ribosomal subunit protein uS2.